The primary structure comprises 97 residues: Putative septation protein SpoVG (97 aa).

It belongs to the SpoVG family.

In terms of biological role, essential for sporulation. Interferes with or is a negative regulator of the pathway leading to asymmetric septation. The sequence is that of Putative septation protein SpoVG from Bacillus cereus (strain 03BB102).